Reading from the N-terminus, the 92-residue chain is Small ribosomal subunit protein uS19 (92 aa).

This sequence belongs to the universal ribosomal protein uS19 family.

Its function is as follows. Protein S19 forms a complex with S13 that binds strongly to the 16S ribosomal RNA. This chain is Small ribosomal subunit protein uS19, found in Acidiphilium cryptum (strain JF-5).